Reading from the N-terminus, the 317-residue chain is Trem-like transcript 1 protein (317 aa).

The first 20 residues, 1–20 (MDCYLLLLLLLLGLAGQGSA), serve as a signal peptide directing secretion. Positions 21-122 (DSHPEVLQAP…PQTLHRVSLL (102 aa)) constitute an Ig-like V-type domain. The Extracellular segment spans residues 21-175 (DSHPEVLQAP…EFRRRENSIP (155 aa)). Disulfide bonds link Cys-39–Cys-105 and Cys-53–Cys-60. The disordered stretch occupies residues 147–166 (TGSLLEDPSLDPSASAGPHE). The chain crosses the membrane as a helical span at residues 176-196 (LIWGAVLLLALVVVAVVIFAV). Residues 197-317 (MARKKGNRLV…PPNSQTPPSK (121 aa)) lie on the Cytoplasmic side of the membrane. Residue Cys-208 is the site of S-palmitoyl cysteine attachment. The disordered stretch occupies residues 212–278 (QSTGVPGMDP…SQPPLPPKVL (67 aa)). Pro residues predominate over residues 261-275 (SSEPPAPPSQPPLPP). At Ser-283 the chain carries Phosphoserine. An ITIM motif is present at residues 284–289 (VTYATV). The disordered stretch occupies residues 295 to 317 (DKGKIASCEPVQDPPNSQTPPSK). Residues 308–317 (PPNSQTPPSK) show a composition bias toward polar residues.

When phosphorylated, interacts with PTPN11. When phosphorylated, interacts with PTPN6. Post-translationally, phosphorylated on tyrosine residues. As to expression, highly expressed in bone marrow leukocytes, splenic megakaryocytes and platelets. Detected in brain, liver and in peritoneal monocytes.

Its subcellular location is the cell membrane. It is found in the cytoplasm. Cell surface receptor that may play a role in the innate and adaptive immune response. The chain is Trem-like transcript 1 protein (Treml1) from Mus musculus (Mouse).